Here is a 20-residue protein sequence, read N- to C-terminus: Disintegrin (20 aa).

The region spanning 1-20 (EAGEECDCGTPENPCCDAAT) is the Disintegrin domain. 2 disulfides stabilise this stretch: Cys6–Cys15 and Cys8–Cys16.

It belongs to the venom metalloproteinase (M12B) family. P-II subfamily. P-IIa sub-subfamily. In terms of assembly, monomer. Expressed by the venom gland.

The protein resides in the secreted. Functionally, inhibits fibrinogen interaction with platelets. Acts by binding to alpha-IIb/beta-3 (ITGA2B/ITGB3) on the platelet surface and inhibits aggregation induced by ADP, thrombin, platelet-activating factor and collagen. The chain is Disintegrin from Bothrops fonsecai (Fonseca's lancehead).